The chain runs to 1039 residues: Error-prone DNA polymerase (1039 aa).

Belongs to the DNA polymerase type-C family. DnaE2 subfamily.

It is found in the cytoplasm. The enzyme catalyses DNA(n) + a 2'-deoxyribonucleoside 5'-triphosphate = DNA(n+1) + diphosphate. DNA polymerase involved in damage-induced mutagenesis and translesion synthesis (TLS). It is not the major replicative DNA polymerase. This Idiomarina loihiensis (strain ATCC BAA-735 / DSM 15497 / L2-TR) protein is Error-prone DNA polymerase.